The following is a 100-amino-acid chain: UPF0251 protein VVA1436 (100 aa).

It belongs to the UPF0251 family.

The chain is UPF0251 protein VVA1436 from Vibrio vulnificus (strain YJ016).